A 399-amino-acid polypeptide reads, in one-letter code: Elongation factor Tu (399 aa).

One can recognise a tr-type G domain in the interval 10–209 (KPHVNVGTIG…EVDKYIPTPQ (200 aa)). A G1 region spans residues 19–26 (GHVDHGKT). 19–26 (GHVDHGKT) contacts GTP. T26 provides a ligand contact to Mg(2+). The segment at 60–64 (GITIA) is G2. Residues 81–84 (DCPG) are G3. GTP is bound by residues 81–85 (DCPGH) and 136–139 (NKQD). The tract at residues 136–139 (NKQD) is G4. A G5 region spans residues 174-176 (SAL).

It belongs to the TRAFAC class translation factor GTPase superfamily. Classic translation factor GTPase family. EF-Tu/EF-1A subfamily. In terms of assembly, monomer.

It localises to the cytoplasm. The catalysed reaction is GTP + H2O = GDP + phosphate + H(+). Its function is as follows. GTP hydrolase that promotes the GTP-dependent binding of aminoacyl-tRNA to the A-site of ribosomes during protein biosynthesis. The chain is Elongation factor Tu from Helicobacter hepaticus (strain ATCC 51449 / 3B1).